The chain runs to 299 residues: Bifunctional protein FolD (299 aa).

NADP(+)-binding positions include 179 to 181 and Ile245; that span reads GPG.

Belongs to the tetrahydrofolate dehydrogenase/cyclohydrolase family. As to quaternary structure, homodimer.

It catalyses the reaction (6R)-5,10-methylene-5,6,7,8-tetrahydrofolate + NADP(+) = (6R)-5,10-methenyltetrahydrofolate + NADPH. The catalysed reaction is (6R)-5,10-methenyltetrahydrofolate + H2O = (6R)-10-formyltetrahydrofolate + H(+). It functions in the pathway one-carbon metabolism; tetrahydrofolate interconversion. Functionally, catalyzes the oxidation of 5,10-methylenetetrahydrofolate to 5,10-methenyltetrahydrofolate and then the hydrolysis of 5,10-methenyltetrahydrofolate to 10-formyltetrahydrofolate. This Deinococcus radiodurans (strain ATCC 13939 / DSM 20539 / JCM 16871 / CCUG 27074 / LMG 4051 / NBRC 15346 / NCIMB 9279 / VKM B-1422 / R1) protein is Bifunctional protein FolD.